Reading from the N-terminus, the 110-residue chain is Small ribosomal subunit protein bS6 (110 aa).

It belongs to the bacterial ribosomal protein bS6 family.

Its function is as follows. Binds together with bS18 to 16S ribosomal RNA. The polypeptide is Small ribosomal subunit protein bS6 (rpsF) (Aquifex aeolicus (strain VF5)).